The following is a 436-amino-acid chain: Phosphomethylpyrimidine synthase (436 aa).

Residues N69, M98, Y127, H163, 185-187, 226-229, and E265 contribute to the substrate site; these read SRG and DACR. H269 contributes to the Zn(2+) binding site. Y292 serves as a coordination point for substrate. H333 is a Zn(2+) binding site. C409, C412, and C416 together coordinate [4Fe-4S] cluster.

It belongs to the ThiC family. The cofactor is [4Fe-4S] cluster.

It carries out the reaction 5-amino-1-(5-phospho-beta-D-ribosyl)imidazole + S-adenosyl-L-methionine = 4-amino-2-methyl-5-(phosphooxymethyl)pyrimidine + CO + 5'-deoxyadenosine + formate + L-methionine + 3 H(+). It functions in the pathway cofactor biosynthesis; thiamine diphosphate biosynthesis. Functionally, catalyzes the synthesis of the hydroxymethylpyrimidine phosphate (HMP-P) moiety of thiamine from aminoimidazole ribotide (AIR) in a radical S-adenosyl-L-methionine (SAM)-dependent reaction. This chain is Phosphomethylpyrimidine synthase, found in Clostridium acetobutylicum (strain ATCC 824 / DSM 792 / JCM 1419 / IAM 19013 / LMG 5710 / NBRC 13948 / NRRL B-527 / VKM B-1787 / 2291 / W).